The sequence spans 905 residues: MTSATSPIILKWDPKSLEIRTLTVERLLEPLVTQVTTLVNTSNKGPSGKKKGRSKKAHVLAASVEQATQNFLEKGEQIAKESQDLKEELVAAVEDVRKQGETMRIASSEFADDPCSSVKRGTMVRAARALLSAVTRLLILADMADVMRLLSHLKIVEEALEAVKNATNEQDLANRFKEFGKEMVKLNYVAARRQQELKDPHCRDEMAAARGALKKNATMLYTASQAFLRHPDVAATRANRDYVFKQVQEAIAGISNAAQATSPTDEAKGHTGIGELAAALNEFDNKIILDPMTFSEARFRPSLEERLESIISGAALMADSSCTRDDRRERIVAECNAVRQALQDLLSEYMNNTGRKEKGDPLNIAIDKMTKKTRDLRRQLRKAVMDHISDSFLETNVPLLVLIEAAKSGNEKEVKEYAQVFREHANKLVEVANLACSISNNEEGVKLVRMAATQIDSLCPQVINAALTLAARPQSKVAQDNMDVFKDQWEKQVRVLTEAVDDITSVDDFLSVSENHILEDVNKCVIALQEGDVDTLDRTAGAIRGRAARVIHIINAEMENYEAGVYTEKVLEATKLLSETVMPRFAEQVEVAIEALSANVPQPFEENEFIDASRLVYDGVRDIRKAVLMIRTPEELEDDSDFEQEDYDVRSRTSVQTEDDQLIAGQSARAIMAQLPQEEKAKIAEQVEIFHQEKSKLDAEVAKWDDSGNDIIVLAKQMCMIMMEMTDFTRGKGPLKNTSDVINAAKKIAEAGSRMDKLARAVADQCPDSACKQDLLAYLQRIALYCHQLNICSKVKAEVQNLGGELIVSGLDSATSLIQAAKNLMNAVVLTVKASYVASTKYQKVYGTAAVNSPVVSWKMKAPEKKPLVKREKPEEFQTRVRRGSQKKHISPVQALSEFKAMDSF.

Thr632 carries the post-translational modification Phosphothreonine. Ser640, Ser651, and Ser853 each carry phosphoserine. Residues 869–879 (VKREKPEEFQT) show a composition bias toward basic and acidic residues. The segment at 869 to 891 (VKREKPEEFQTRVRRGSQKKHIS) is disordered. The segment covering 880–890 (RVRRGSQKKHI) has biased composition (basic residues). The residue at position 891 (Ser891) is a Phosphoserine.

Belongs to the vinculin/alpha-catenin family. As to quaternary structure, interacts with CDH1 and CDH2. Interacts with ZNF639; recruits CTNNA2 to the nucleus. Interacts with F-actin.

It localises to the cell membrane. It is found in the cytoplasm. Its subcellular location is the cytoskeleton. The protein resides in the cell junction. The protein localises to the adherens junction. It localises to the cell projection. It is found in the axon. Its subcellular location is the nucleus. In terms of biological role, may function as a linker between cadherin adhesion receptors and the cytoskeleton to regulate cell-cell adhesion and differentiation in the nervous system. Required for proper regulation of cortical neuronal migration and neurite growth. It acts as a negative regulator of Arp2/3 complex activity and Arp2/3-mediated actin polymerization. It thereby suppresses excessive actin branching which would impair neurite growth and stability. Regulates morphological plasticity of synapses and cerebellar and hippocampal lamination during development. Functions in the control of startle modulation. The polypeptide is Catenin alpha-2 (CTNNA2) (Pongo abelii (Sumatran orangutan)).